A 164-amino-acid polypeptide reads, in one-letter code: UPF0304 protein YfbU (164 aa).

It belongs to the UPF0304 family.

This is UPF0304 protein YfbU from Shigella flexneri.